Here is a 558-residue protein sequence, read N- to C-terminus: Magnesium-chelatase 60 kDa subunit (558 aa).

2 disordered regions span residues Met-234–Met-268 and Met-298–Leu-325. Positions Ala-240 to Asp-254 are enriched in acidic residues. The segment covering Met-298 to Ala-308 has biased composition (low complexity). Residues Val-376 to Ala-555 form the VWFA domain.

The protein belongs to the Mg-chelatase subunits D/I family.

It catalyses the reaction protoporphyrin IX + Mg(2+) + ATP + H2O = Mg-protoporphyrin IX + ADP + phosphate + 3 H(+). It functions in the pathway porphyrin-containing compound metabolism; bacteriochlorophyll biosynthesis. Involved in bacteriochlorophyll biosynthesis; introduces a magnesium ion into protoporphyrin IX to yield Mg-protoporphyrin IX. The chain is Magnesium-chelatase 60 kDa subunit (bchD) from Cereibacter sphaeroides (strain ATCC 17023 / DSM 158 / JCM 6121 / CCUG 31486 / LMG 2827 / NBRC 12203 / NCIMB 8253 / ATH 2.4.1.) (Rhodobacter sphaeroides).